The sequence spans 346 residues: Probable electron transfer flavoprotein subunit alpha, mitochondrial (346 aa).

285 to 313 (LYVAIGISGAIQHLAGMKESKMIIAINKD) serves as a coordination point for FAD.

Belongs to the ETF alpha-subunit/FixB family. In terms of assembly, heterodimer of an alpha and a beta subunit. FAD is required as a cofactor.

The protein resides in the mitochondrion matrix. Its function is as follows. The electron transfer flavoprotein serves as a specific electron acceptor for several dehydrogenases, including five acyl-CoA dehydrogenases, glutaryl-CoA and sarcosine dehydrogenase. It transfers the electrons to the main mitochondrial respiratory chain via ETF-ubiquinone oxidoreductase (ETF dehydrogenase). The protein is Probable electron transfer flavoprotein subunit alpha, mitochondrial (ETF1) of Cryptococcus gattii serotype B (strain WM276 / ATCC MYA-4071) (Filobasidiella gattii).